The following is a 324-amino-acid chain: Alkanal monooxygenase beta chain (324 aa).

The protein belongs to the bacterial luciferase oxidoreductase family. Heterodimer of an alpha and a beta chain.

It carries out the reaction a long-chain fatty aldehyde + FMNH2 + O2 = a long-chain fatty acid + hnu + FMN + H2O + 2 H(+). Its function is as follows. Light-emitting reaction in luminous bacteria. The specific role of the beta subunit is unknown, but it is absolutely required for bioluminescence activity. The polypeptide is Alkanal monooxygenase beta chain (luxB) (Photorhabdus luminescens (Xenorhabdus luminescens)).